The following is a 389-amino-acid chain: Cytochrome b (389 aa).

A run of 4 helical transmembrane segments spans residues Phe-32–Met-52, Trp-76–Gly-98, Leu-113–Val-133, and Phe-179–Met-199. Residues His-82 and His-96 each coordinate heme b. Heme b contacts are provided by His-183 and His-197. Residue His-202 coordinates a ubiquinone. 4 helical membrane-spanning segments follow: residues Phe-225–Phe-245, Leu-289–Asp-309, Ala-321–Ser-341, and Tyr-348–Pro-368.

Belongs to the cytochrome b family. As to quaternary structure, fungal cytochrome b-c1 complex contains 10 subunits; 3 respiratory subunits, 2 core proteins and 5 low-molecular weight proteins. Cytochrome b-c1 complex is a homodimer. Heme b is required as a cofactor.

The protein localises to the mitochondrion inner membrane. Component of the ubiquinol-cytochrome c reductase complex (complex III or cytochrome b-c1 complex) that is part of the mitochondrial respiratory chain. The b-c1 complex mediates electron transfer from ubiquinol to cytochrome c. Contributes to the generation of a proton gradient across the mitochondrial membrane that is then used for ATP synthesis. The sequence is that of Cytochrome b (COB) from Strobilurus tenacellus.